We begin with the raw amino-acid sequence, 283 residues long: Urease accessory protein UreD 1 (283 aa).

This sequence belongs to the UreD family. In terms of assembly, ureD, UreF and UreG form a complex that acts as a GTP-hydrolysis-dependent molecular chaperone, activating the urease apoprotein by helping to assemble the nickel containing metallocenter of UreC. The UreE protein probably delivers the nickel.

It is found in the cytoplasm. In terms of biological role, required for maturation of urease via the functional incorporation of the urease nickel metallocenter. The protein is Urease accessory protein UreD 1 of Brucella anthropi (strain ATCC 49188 / DSM 6882 / CCUG 24695 / JCM 21032 / LMG 3331 / NBRC 15819 / NCTC 12168 / Alc 37) (Ochrobactrum anthropi).